A 787-amino-acid polypeptide reads, in one-letter code: Transcriptional corepressor LEUNIG_HOMOLOG (787 aa).

Positions 1-88 (MAQSNWEADK…IEAQQGKAKE (88 aa)) are required for SEU-binding. The 33-residue stretch at 8–40 (ADKMLDVYIYDYLVKKKLHNTAKSFMTEGKVSP) folds into the LisH domain. Residues 77–106 (AYIEAQQGKAKEQQMQIQQLQMMRQAQMQR) adopt a coiled-coil conformation. A disordered region spans residues 299-413 (NMTNSPMYGG…TPSTHTPVDG (115 aa)). Low complexity-rich tracts occupy residues 336–346 (SIGSPMQSSSS) and 355–372 (QQSS…QSQQ). A compositionally biased stretch (polar residues) spans 380–409 (PSSSGPANSTGTGNTVGPSNSQPSTPSTHT). WD repeat units follow at residues 508 to 547 (KSAS…VEST), 550 to 589 (EHAH…YFLR), 593 to 633 (GHAA…VRAV), 635 to 671 (GAST…KRVN), 675 to 715 (GHSS…HELS), 717 to 755 (SGNK…CMTV), and 757 to 787 (GHEC…KIWK).

In terms of assembly, forms corepressor complexes with SLK1 and SLK2; LUH is the transcription repressor subunit and SLK1 and SLK2 the specific DNA-binding adapters. Interacts with SEU. Binds to YAB3, YAB5 and YAB1/FIL; these complexes promote adaxial cell identity in leaves as well as embryonic shoot apical meristem (SAM) initiation and postembryonic SAM maintenance. Expressed in roots, stems, leaves, seedlings, apex, flowers, siliques, flower organs and seeds (including seed coat).

The protein localises to the nucleus. Its function is as follows. Transcription repressor subunit of the SEU-SLK1 and SEU-SLK2 transcriptional corepressor of abiotic stress (e.g. salt and osmotic stress) response genes, by means of an epigenetic process involving histone modification (e.g. H3K9 and H3K14 acetylation), probably by recruiting HDAC, to facilitate the condensation of chromatin thus preventing transcription at the target genes. Can also act as a transcription activator. Implicated in embryo and floral development. Involved in post-synthesis cell wall modifications necessary for mucilage extrusion from seeds upon imbibition, probably by promoting the expression of genes required for mucilage maturation (e.g. MUM2). Regulates the maintenance on leaf polarity and meristem activity as well as the initiation of embryonic shoot apical meristem (SAM) development. This Arabidopsis thaliana (Mouse-ear cress) protein is Transcriptional corepressor LEUNIG_HOMOLOG.